The chain runs to 58 residues: Small ribosomal subunit protein eS30 (58 aa).

The segment at 1-58 (MGKVHGSLARAGKVKNQTPKVPKLDKKKRLTGRAKKRQLYNRRFSDNGGRKKGPNSKA) is disordered. The segment covering 25–40 (DKKKRLTGRAKKRQLY) has biased composition (basic residues).

It belongs to the eukaryotic ribosomal protein eS30 family. In terms of assembly, component of the small ribosomal subunit. Mature ribosomes consist of a small (40S) and a large (60S) subunit. The 40S subunit contains about 32 different proteins and 1 molecule of RNA (18S). The 60S subunit contains about 42 different proteins and 3 molecules of RNA (28S, 5.8S and 5S).

The protein resides in the cytoplasm. In terms of biological role, component of the ribosome, a large ribonucleoprotein complex responsible for the synthesis of proteins in the cell. The small ribosomal subunit (SSU) binds messenger RNAs (mRNAs) and translates the encoded message by selecting cognate aminoacyl-transfer RNA (tRNA) molecules. The large subunit (LSU) contains the ribosomal catalytic site termed the peptidyl transferase center (PTC), which catalyzes the formation of peptide bonds, thereby polymerizing the amino acids delivered by tRNAs into a polypeptide chain. The nascent polypeptides leave the ribosome through a tunnel in the LSU and interact with protein factors that function in enzymatic processing, targeting, and the membrane insertion of nascent chains at the exit of the ribosomal tunnel. The sequence is that of Small ribosomal subunit protein eS30 from Plasmodium falciparum (isolate 3D7).